The chain runs to 330 residues: Aspartate--ammonia ligase (330 aa).

It belongs to the class-II aminoacyl-tRNA synthetase family. AsnA subfamily.

The protein localises to the cytoplasm. It carries out the reaction L-aspartate + NH4(+) + ATP = L-asparagine + AMP + diphosphate + H(+). Its pathway is amino-acid biosynthesis; L-asparagine biosynthesis; L-asparagine from L-aspartate (ammonia route): step 1/1. The chain is Aspartate--ammonia ligase from Streptococcus pyogenes serotype M3 (strain ATCC BAA-595 / MGAS315).